Consider the following 496-residue polypeptide: Transcription factor CP2 (496 aa).

Residues 61–300 (ENKILPFQYV…SPGFNSSHSS (240 aa)) enclose the Grh/CP2 DB domain. The tract at residues 133-386 (EHQQLEGWRW…LFNALKGRMV (254 aa)) is DNA-binding. Disordered regions lie at residues 238–268 (FKPKGADRKQKTDREKMEKRTPHEKEKYQPS) and 296–327 (SSHSSFSIGEGNGSPNHQPEPPPPIADNLLPT). Positions 241–265 (KGADRKQKTDREKMEKRTPHEKEKY) are enriched in basic and acidic residues.

The protein belongs to the grh/CP2 family. CP2 subfamily. Component of the SSP (stage selector protein) complex, which appears to be a heteromer of TFCP2 and 2 copies of NFE4. As to expression, expressed in the epiblast at the pre-primitive streak stage. At the primitive streak stage, expressed in the extending primitive streak and in the prospective neural plate. At stages 7 and 8, expressed in the neural folds, somites and in the regressing primitive streak. At stage 12, ubiquitously expressed in the whole embryo.

It is found in the nucleus. Functionally, binds the B-response element 5'-CAAGTCCAGGCAAGT-3' of the ENS1/ERNI promoter. May be the major transcription activator thus being essential for its expression. This Gallus gallus (Chicken) protein is Transcription factor CP2 (TFCP2).